The following is a 326-amino-acid chain: Lipoyl synthase (326 aa).

Residues Cys-68, Cys-73, Cys-79, Cys-94, Cys-98, Cys-101, and Ser-308 each coordinate [4Fe-4S] cluster. Residues 80–297 enclose the Radical SAM core domain; that stretch reads FNHGTATFMI…KDVAMGLGFS (218 aa).

The protein belongs to the radical SAM superfamily. Lipoyl synthase family. [4Fe-4S] cluster serves as cofactor.

Its subcellular location is the cytoplasm. It carries out the reaction [[Fe-S] cluster scaffold protein carrying a second [4Fe-4S](2+) cluster] + N(6)-octanoyl-L-lysyl-[protein] + 2 oxidized [2Fe-2S]-[ferredoxin] + 2 S-adenosyl-L-methionine + 4 H(+) = [[Fe-S] cluster scaffold protein] + N(6)-[(R)-dihydrolipoyl]-L-lysyl-[protein] + 4 Fe(3+) + 2 hydrogen sulfide + 2 5'-deoxyadenosine + 2 L-methionine + 2 reduced [2Fe-2S]-[ferredoxin]. Its pathway is protein modification; protein lipoylation via endogenous pathway; protein N(6)-(lipoyl)lysine from octanoyl-[acyl-carrier-protein]: step 2/2. In terms of biological role, catalyzes the radical-mediated insertion of two sulfur atoms into the C-6 and C-8 positions of the octanoyl moiety bound to the lipoyl domains of lipoate-dependent enzymes, thereby converting the octanoylated domains into lipoylated derivatives. The protein is Lipoyl synthase of Aeromonas salmonicida (strain A449).